The chain runs to 332 residues: Fructose-1,6-bisphosphatase class 1 (332 aa).

4 residues coordinate Mg(2+): glutamate 89, aspartate 110, leucine 112, and aspartate 113. Substrate is bound by residues 113 to 116 (DGSS), asparagine 206, tyrosine 239, 257 to 259 (YLY), and lysine 269. Glutamate 275 lines the Mg(2+) pocket.

Belongs to the FBPase class 1 family. In terms of assembly, homotetramer. Mg(2+) is required as a cofactor.

Its subcellular location is the cytoplasm. It catalyses the reaction beta-D-fructose 1,6-bisphosphate + H2O = beta-D-fructose 6-phosphate + phosphate. It functions in the pathway carbohydrate biosynthesis; gluconeogenesis. In Escherichia coli (strain ATCC 8739 / DSM 1576 / NBRC 3972 / NCIMB 8545 / WDCM 00012 / Crooks), this protein is Fructose-1,6-bisphosphatase class 1.